A 323-amino-acid chain; its full sequence is tRNA U34 carboxymethyltransferase (323 aa).

Carboxy-S-adenosyl-L-methionine-binding positions include Lys-91, Trp-105, Lys-110, Gly-130, 152 to 154 (DPS), 181 to 182 (IE), Met-196, Tyr-200, and Arg-315.

The protein belongs to the class I-like SAM-binding methyltransferase superfamily. CmoB family. In terms of assembly, homotetramer.

It catalyses the reaction carboxy-S-adenosyl-L-methionine + 5-hydroxyuridine(34) in tRNA = 5-carboxymethoxyuridine(34) in tRNA + S-adenosyl-L-homocysteine + H(+). Functionally, catalyzes carboxymethyl transfer from carboxy-S-adenosyl-L-methionine (Cx-SAM) to 5-hydroxyuridine (ho5U) to form 5-carboxymethoxyuridine (cmo5U) at position 34 in tRNAs. The sequence is that of tRNA U34 carboxymethyltransferase from Vibrio vulnificus (strain CMCP6).